Consider the following 152-residue polypeptide: Urease accessory protein UreE (152 aa).

Belongs to the UreE family.

The protein localises to the cytoplasm. Functionally, involved in urease metallocenter assembly. Binds nickel. Probably functions as a nickel donor during metallocenter assembly. This is Urease accessory protein UreE from Citrobacter koseri (strain ATCC BAA-895 / CDC 4225-83 / SGSC4696).